Reading from the N-terminus, the 100-residue chain is Small ribosomal subunit protein uS14c (100 aa).

It belongs to the universal ribosomal protein uS14 family. Part of the 30S ribosomal subunit.

The protein resides in the plastid. It is found in the chloroplast. Functionally, binds 16S rRNA, required for the assembly of 30S particles. The chain is Small ribosomal subunit protein uS14c from Tupiella akineta (Green alga).